Here is a 330-residue protein sequence, read N- to C-terminus: Small ribosomal subunit protein mS35 (330 aa).

The tract at residues 50-73 (AAGKGVRGQMKPRRQAGEPRTERM) is disordered. The span at 64–73 (QAGEPRTERM) shows a compositional bias: basic and acidic residues.

Belongs to the mitochondrion-specific ribosomal protein mS35 family. As to quaternary structure, component of the mitochondrial ribosome small subunit (28S) which comprises a 12S rRNA and about 30 distinct proteins.

The protein resides in the mitochondrion. This chain is Small ribosomal subunit protein mS35 (mrps35), found in Danio rerio (Zebrafish).